Reading from the N-terminus, the 687-residue chain is Glycine--tRNA ligase beta subunit (687 aa).

The protein belongs to the class-II aminoacyl-tRNA synthetase family. In terms of assembly, tetramer of two alpha and two beta subunits.

The protein resides in the cytoplasm. It carries out the reaction tRNA(Gly) + glycine + ATP = glycyl-tRNA(Gly) + AMP + diphosphate. The protein is Glycine--tRNA ligase beta subunit of Neisseria meningitidis serogroup C (strain 053442).